The following is a 285-amino-acid chain: Small ribosomal subunit protein uS3 (285 aa).

In terms of domain architecture, KH type-2 spans 39 to 107 (VREFLKKKLK…PVAVNIEEVR (69 aa)). A disordered region spans residues 211–285 (GDAPVMRGED…RAAPPAAKGE (75 aa)). Residues 217–241 (RGEDRPEDDRRRRNPRGDRPGDRRG) are compositionally biased toward basic and acidic residues. A compositionally biased stretch (gly residues) spans 242 to 255 (PGAGRGGPGAGRGP). Low complexity-rich tracts occupy residues 256–267 (ADGASAAPSGDA) and 276–285 (RAAPPAAKGE).

It belongs to the universal ribosomal protein uS3 family. Part of the 30S ribosomal subunit. Forms a tight complex with proteins S10 and S14.

Binds the lower part of the 30S subunit head. Binds mRNA in the 70S ribosome, positioning it for translation. The polypeptide is Small ribosomal subunit protein uS3 (Leptothrix cholodnii (strain ATCC 51168 / LMG 8142 / SP-6) (Leptothrix discophora (strain SP-6))).